A 217-amino-acid chain; its full sequence is Twisted gastrulation protein homolog 1-A (217 aa).

A signal peptide spans Met-1–Gly-26. N-linked (GlcNAc...) asparagine glycans are attached at residues Asn-53 and Asn-147.

This sequence belongs to the twisted gastrulation protein family.

The protein localises to the secreted. Functionally, involved in dorsal-ventral patterning. Appears to function predominantly as a ventralizing factor, through its actions as a BMP signaling agonist, acting through both chd-dependent and chd-independent mechanisms. May also antagonize BMP signaling, probably via formation of ternary complexes with chd and BMPs, resulting in dorsalization. The sequence is that of Twisted gastrulation protein homolog 1-A (twsg1a) from Danio rerio (Zebrafish).